Consider the following 464-residue polypeptide: Cysteine--tRNA ligase 1 (464 aa).

Zn(2+) is bound at residue cysteine 28. The 'HIGH' region motif lies at 30–40 (VTIYDLCHIGH). Residues cysteine 209, histidine 234, and glutamate 238 each coordinate Zn(2+). The 'KMSKS' region signature appears at 266–270 (KMSKS). Lysine 269 is a binding site for ATP.

The protein belongs to the class-I aminoacyl-tRNA synthetase family. As to quaternary structure, monomer. Requires Zn(2+) as cofactor.

Its subcellular location is the cytoplasm. The catalysed reaction is tRNA(Cys) + L-cysteine + ATP = L-cysteinyl-tRNA(Cys) + AMP + diphosphate. The protein is Cysteine--tRNA ligase 1 of Photobacterium profundum (strain SS9).